Reading from the N-terminus, the 242-residue chain is tRNA (guanine-N(1)-)-methyltransferase (242 aa).

S-adenosyl-L-methionine-binding positions include Gly109 and 129 to 134 (LGDFVL).

This sequence belongs to the RNA methyltransferase TrmD family. In terms of assembly, homodimer.

Its subcellular location is the cytoplasm. It carries out the reaction guanosine(37) in tRNA + S-adenosyl-L-methionine = N(1)-methylguanosine(37) in tRNA + S-adenosyl-L-homocysteine + H(+). Functionally, specifically methylates guanosine-37 in various tRNAs. This chain is tRNA (guanine-N(1)-)-methyltransferase, found in Exiguobacterium sibiricum (strain DSM 17290 / CCUG 55495 / CIP 109462 / JCM 13490 / 255-15).